The primary structure comprises 450 residues: MEGSKTSNNSTMQVSFVCQRCSQPLKLDTSFKILDRVTIQELTAPLLTTAQAKPGETQEEETNSGEEPFIETPRQDGVSRRFIPPARMMSTESANSFTLIGEASDGGTMENLSRRLKVTGDLFDIMSGQTDVDHPLCEECTDTLLDQLDTQLNVTENECQNYKRCLEILEQMNEDDSEQLQMELKELALEEERLIQELEDVEKNRKIVAENLEKVQAEAERLDQEEAQYQREYSEFKRQQLELDDELKSVENQMRYAQMQLDKLKKTNVFNATFHIWHSGQFGTINNFRLGRLPSVPVEWNEINAAWGQTVLLLHALANKMGLKFQRYRLVPYGNHSYLESLTDKSKELPLYCSGGLRFFWDNKFDHAMVAFLDCVQQFKEEVEKGETRFCLPYRMDVEKGKIEDTGGSGGSYSIKTQFNSEEQWTKALKFMLTNLKWGLAWVSSQFYNK.

M1 is modified (N-acetylmethionine). 2 positions are modified to phosphoserine: S15 and S30. The tract at residues 48 to 72 (TTAQAKPGETQEEETNSGEEPFIET) is disordered. Phosphoserine; by AMPK is present on residues S90, S93, and S96. The BH3 motif lies at 108–127 (TMENLSRRLKVTGDLFDIMS). The tract at residues 112–159 (LSRRLKVTGDLFDIMSGQTDVDHPLCEECTDTLLDQLDTQLNVTENEC) is interaction with BCL2 and BCL2L1. T119 is subject to Phosphothreonine; by DAPK1. The stretch at 142 to 269 (DTLLDQLDTQ…QLDKLKKTNV (128 aa)) forms a coiled coil. An evolutionary conserved domain (ECD) region spans residues 245–450 (DELKSVENQM…AWVSSQFYNK (206 aa)). Residues K402 and K437 each participate in a glycyl lysine isopeptide (Lys-Gly) (interchain with G-Cter in ubiquitin) cross-link. Residues 425 to 450 (WTKALKFMLTNLKWGLAWVSSQFYNK) are required for membrane-association.

Belongs to the beclin family. In terms of assembly, a homodimeric form is proposed to exist; this metastable form readily transits to ATG14- or UVRAG-containing complexes with BECN1:UVRAG being more stable than BECN1:ATG14. Component of the PI3K (PI3KC3/PI3K-III/class III phosphatidylinositol 3-kinase) complex the core of which is composed of the catalytic subunit PIK3C3, the regulatory subunit PIK3R4 and BECN1 associating with additional regulatory/auxiliary subunits to form alternative complex forms. Alternative complex forms containing a fourth regulatory subunit in a mutually exclusive manner are PI3K complex I (PI3KC3-C1) containing ATG14, and PI3K complex II (PI3KC3-C2) containing UVRAG. PI3KC3-C1 displays a V-shaped architecture with PIK3R4 serving as a bridge between PIK3C3 and the ATG14:BECN1 subcomplex. Both, PI3KC3-C1 and PI3KC3-C2, can associate with further regulatory subunits, such as RUBCN, SH3GLB1/Bif-1 and AMBRA1. PI3KC3-C1 probably associates with PIK3CB. Forms a complex with PPP2CA and AMBRA1; AMBRA1 and BECN1 components of the complex regulate MYC stability via different pathways. Component of the complex, at least composed of LRPPRC, BECN1 and BCL2; the interactions prevent BECN1 from forming an autophagy-inducing complex with PIK3C3. Interacts with AMBRA1, GOPC, GRID2. Interacts with BCL2 and BCL2L1 isoform Bcl-X(L); the interaction inhibits BECN1 function in promoting autophagy by interfering with the formation of the PI3K complex. Interacts with cytosolic HMGB1; inhibits the interaction of BECN1 and BCL2 leading to promotion of autophagy. Interacts with USP10, USP13, VMP1, DAPK1, RAB39A. Interacts with the poly-Gln domain of ATXN3; the interaction causes deubiquitination at Lys-402 and stabilizes BECN1. Interacts with SLAMF1. Interacts with TRIM5; the interaction causes activation of BECN1 by causing its dissociation from its inhibitors BCL2 and TAB2. Interacts with active ULK1 (phosphorylated on 'Ser-317') and MEFV simultaneously. Interacts with WDR81 and WDR91; negatively regulates the PI3 kinase/PI3K activity associated with endosomal membranes. Interacts with LAPTM4B; competes with EGFR for LAPTM4B binding; regulates EGFR activity. Interacts with TRIM50. Interacts with TRIM16. Interacts with ATG14; this interaction is increased in the absence of TMEM39A. Interacts with WASHC1; preventing interaction with AMBRA1 and the DCX(AMBRA1) complex and subsequent ubiquitination. Interacts with TRIM17. Interacts with BCL2L10/BCL-B (via BH1 domain). Interacts with SH3BGRL. Interacts with IRGM; enhancing BECN1-interacting partners and influencing the composition of the BECN1 complex. Interacts with ARMC3. Interacts with LRPPRC. In terms of processing, phosphorylation at Thr-119 by DAPK1 reduces its interaction with BCL2 and BCL2L1 and promotes induction of autophagy. In response to autophagic stimuli, phosphorylated at serine residues by AMPK in an ATG14-dependent manner, and this phosphorylation is critical for maximally efficient autophagy. Polyubiquitinated by NEDD4, both with 'Lys-11'- and 'Lys-63'-linkages. 'Lys-11'-linked polyubiquitination leads to degradation and is enhanced when the stabilizing interaction partner VPS34 is depleted. Deubiquitinated by USP10 and USP13, leading to stabilize the PIK3C3/VPS34-containing complexes. Polyubiquitinated at Lys-402 with 'Lys-48'-linkages. 'Lys-48'-linked polyubiquitination of Lys-402 leads to degradation. Deubiquitinated by ATXN3, leading to stabilization. Ubiquitinated at Lys-437 via 'Lys-63'-linkage by the DCX(AMBRA1) complex, thereby increasing the association between BECN1 and PIK3C3 to promote PIK3C3 activity. 'Lys-48'-linked ubiquitination by RNF216 leads to proteasomal degradation and autophagy inhibition. Post-translationally, proteolytically processed by caspases including CASP8 and CASP3; the C-terminal fragments lack autophagy-inducing capacity and are proposed to induce apoptosis. Thus the cleavage is proposed to be an determinant to switch from autophagy to apoptosis pathways affecting cellular homeostasis including viral infections and survival of tumor cells.

The protein localises to the cytoplasm. It localises to the golgi apparatus. Its subcellular location is the trans-Golgi network membrane. It is found in the endosome membrane. The protein resides in the endoplasmic reticulum membrane. The protein localises to the mitochondrion membrane. It localises to the cytoplasmic vesicle. Its subcellular location is the autophagosome. It is found in the mitochondrion. The protein resides in the nucleus. Its function is as follows. Plays a central role in autophagy. Acts as a core subunit of the PI3K complex that mediates formation of phosphatidylinositol 3-phosphate; different complex forms are believed to play a role in multiple membrane trafficking pathways: PI3KC3-C1 is involved in initiation of autophagosomes and PI3KC3-C2 in maturation of autophagosomes and endocytosis. Involved in regulation of degradative endocytic trafficking and required for the abscission step in cytokinesis, probably in the context of PI3KC3-C2. Essential for the formation of PI3KC3-C2 but not PI3KC3-C1 PI3K complex forms. Involved in endocytosis. May play a role in antiviral host defense. Beclin-1-C 35 kDa localized to mitochondria can promote apoptosis; it induces the mitochondrial translocation of BAX and the release of proapoptotic factors. The chain is Beclin-1 (BECN1) from Pongo abelii (Sumatran orangutan).